A 206-amino-acid chain; its full sequence is HTH-type transcriptional regulator Hpr (206 aa).

Residues A13–G157 form the HTH marR-type domain. The H-T-H motif DNA-binding region spans I63–E86. Residues S186–V206 form a disordered region.

As to quaternary structure, homodimer.

Functionally, negative regulator of protease production and sporulation. This chain is HTH-type transcriptional regulator Hpr, found in Bacillus pumilus (strain SAFR-032).